A 321-amino-acid chain; its full sequence is Sporulation protein cse15 (321 aa).

2 coiled-coil regions span residues 37–70 (FHQK…TKEK) and 108–205 (IEEK…KEKL). 2 stretches are compositionally biased toward basic and acidic residues: residues 234–243 (GTKQKEKTEE) and 282–293 (AKSHTIEELKNR). Disordered stretches follow at residues 234-253 (GTKQ…AQPN) and 274-293 (AHAQ…LKNR).

This Bacillus subtilis (strain 168) protein is Sporulation protein cse15 (cse15).